The following is a 147-amino-acid chain: Hemoglobin subunit beta (147 aa).

At V2 the chain carries N-acetylvaline. One can recognise a Globin domain in the interval 3–147 (HLTGDEKAAV…VANALAHKYH (145 aa)). T13 is modified (phosphothreonine). Residue S45 is modified to Phosphoserine. K60 is modified (N6-acetyllysine). Position 64 (H64) interacts with heme b. K83 bears the N6-acetyllysine mark. H93 is a binding site for heme b. C94 is modified (S-nitrosocysteine). N6-acetyllysine is present on K145.

This sequence belongs to the globin family. As to quaternary structure, heterotetramer of two alpha chains and two beta chains. Red blood cells.

Its function is as follows. Involved in oxygen transport from the lung to the various peripheral tissues. This is Hemoglobin subunit beta (HBB) from Alouatta belzebul (Red-handed howler monkey).